The chain runs to 478 residues: Putative sulfate transporter YbaR (478 aa).

Helical transmembrane passes span 19 to 39 (ILAG…FSII), 42 to 62 (VDPM…SIFG), 65 to 85 (PGMI…LVAD), 87 to 107 (GLQY…ILGI), 121 to 141 (VMIG…LPQF), 143 to 163 (GASW…YVLP), 168 to 188 (AVPS…TFHV), 220 to 240 (IIFP…LLTA), 259 to 279 (GQGI…CAMI), 295 to 315 (SAFV…HVVV), 345 to 365 (APLT…VTDD), and 366 to 386 (LSKG…AKIS). One can recognise an STAS domain in the interval 389-478 (KIVSHAEDQK…ASKSLMKQMA (90 aa)).

The protein belongs to the SLC26A/SulP transporter (TC 2.A.53) family.

It localises to the cell membrane. In Bacillus subtilis (strain 168), this protein is Putative sulfate transporter YbaR (ybaR).